Consider the following 120-residue polypeptide: Small ribosomal subunit protein eS17 (120 aa).

This sequence belongs to the eukaryotic ribosomal protein eS17 family. In terms of assembly, component of the small ribosomal subunit.

The protein resides in the cytoplasm. This chain is Small ribosomal subunit protein eS17 (RPS17), found in Encephalitozoon cuniculi (strain GB-M1) (Microsporidian parasite).